The primary structure comprises 1577 residues: Vacuolar protein sorting/targeting protein PEP1 (1577 aa).

Positions 1–21 (MILLHFVYSLWALLLIPLINA) are cleaved as a signal peptide. Residues 22–1391 (EEFTPKVTKT…EFKEKYSVSA (1370 aa)) lie on the Lumenal side of the membrane. 2 BNR repeats span residues 58–68 (ISFDDGETWEK) and 101–111 (YITNDQGKSWE). 2 N-linked (GlcNAc...) asparagine glycosylation sites follow: asparagine 121 and asparagine 168. BNR repeat units lie at residues 179-187 (SNDGGKSFS) and 414-423 (ISVDNGLTWT). Residue asparagine 445 is glycosylated (N-linked (GlcNAc...) asparagine). BNR repeat units follow at residues 485 to 495 (FISRDGGLTWK), 531 to 541 (YYSLDQGKTWT), and 762 to 771 (YISHDGGQTI). Asparagine 791 carries N-linked (GlcNAc...) asparagine glycosylation. A BNR 8 repeat occupies 859 to 869 (YLTNDGGETFT). Asparagine 1008 carries an N-linked (GlcNAc...) asparagine glycan. BNR repeat units lie at residues 1141-1150 (FFTTDGGETW) and 1183-1192 (YSTDFGKTWK). Residue asparagine 1301 is glycosylated (N-linked (GlcNAc...) asparagine). The chain crosses the membrane as a helical span at residues 1392–1412 (GPFAFIFISILLIIFFAAWFV). Residues 1413 to 1577 (YDRGIRRNGG…DSTAPSNENQ (165 aa)) are Cytoplasmic-facing. The tract at residues 1531-1577 (DDVPTLEEEHTSYTDQPTTTDVPDALPEGNEENIDRPDSTAPSNENQ) is disordered.

This sequence belongs to the VPS10-related sortilin family.

It localises to the golgi apparatus. The protein localises to the trans-Golgi network membrane. It is found in the prevacuolar compartment membrane. Functions as a sorting receptor in the Golgi compartment required for the intracellular sorting and delivery of soluble vacuolar proteins, like carboxypeptidase Y (CPY) and proteinase A. Executes multiple rounds of sorting by cycling between the late Golgi and a prevacuolar endosome-like compartment. Binds the Golgi-modified P2 form of CPY, and this interaction is dependent on the presence of an intact CPY vacuolar protein sorting signal. The polypeptide is Vacuolar protein sorting/targeting protein PEP1 (PEP1) (Saccharomyces cerevisiae (strain RM11-1a) (Baker's yeast)).